Here is a 1604-residue protein sequence, read N- to C-terminus: Metabotropic glutamate receptor-like protein R (1604 aa).

Positions 1 to 27 (MVIKKPFIFIFICFLICLLICIDLTNC) are cleaved as a signal peptide. Residues 28 to 1149 (NTINNNNNNN…TDVSKTKIAK (1122 aa)) are Extracellular-facing. Residues 38 to 69 (NNNNNNNNNNNNNNNNNNNNNNNNNNNNNNDN) show a composition bias toward low complexity. Residues 38 to 72 (NNNNNNNNNNNNNNNNNNNNNNNNNNNNNNDNNEN) form a disordered region. A coiled-coil region spans residues 98-133 (DFYINKIKKEIKDREKYKNNIENEILKINSQKKRKK). Residues 213–263 (NNNNNNNNNNNNNNNNNNKNNNNNNNNKNNNNNNNNKNNNNNNNNKNNNKN) are disordered. Residues asparagine 285, asparagine 327, asparagine 359, asparagine 375, asparagine 489, asparagine 498, asparagine 525, asparagine 577, asparagine 593, asparagine 624, asparagine 768, asparagine 837, asparagine 841, asparagine 851, asparagine 864, asparagine 876, asparagine 885, asparagine 888, asparagine 913, asparagine 967, asparagine 991, asparagine 1097, and asparagine 1109 are each glycosylated (N-linked (GlcNAc...) asparagine). Residues 1150 to 1170 (IIIGISAIIVSIGVLITAILT) form a helical membrane-spanning segment. The Cytoplasmic portion of the chain corresponds to 1171-1184 (FIYRKRKIMRYSNP). Residues 1185-1205 (VFLLIILVGCVCGLVSTFVSF) traverse the membrane as a helical segment. The Extracellular segment spans residues 1206-1211 (STTSAT). A helical transmembrane segment spans residues 1212–1232 (CSIRMVLIPLFFFIITSAIFI). Residues 1233–1256 (KQYRVYCLIRGVEELHDMSIENSY) lie on the Cytoplasmic side of the membrane. A helical membrane pass occupies residues 1257 to 1277 (LLKLQSFILIIPAILIAVSVI). Residues 1278 to 1304 (ATRMHRKYNFDLQKETIQAYCYSKNFY) lie on the Extracellular side of the membrane. Residues 1305–1325 (IIFICLALYEFSILLYGCWIV) traverse the membrane as a helical segment. Residues 1326–1340 (IKCRQYRSFPGSFNE) are Cytoplasmic-facing. The helical transmembrane segment at 1341–1361 (FFYIGVLIYVLTVILVVSIPI) threads the bilayer. Residues 1362 to 1372 (GFALLNSALTD) lie on the Extracellular side of the membrane. Residues 1373-1393 (FLLYSIPILVLIVAIIGLLFA) form a helical membrane-spanning segment. At 1394-1604 (PKFYFLFRTD…KSSQNSPLLD (211 aa)) the chain is on the cytoplasmic side. The segment at 1457-1604 (TGSNTSDDVS…KSSQNSPLLD (148 aa)) is disordered. Composition is skewed to low complexity over residues 1471-1527 (FDSP…NKNN) and 1534-1556 (SSSN…GRSS). Residues 1563-1572 (NNKKNRRKNS) are compositionally biased toward basic residues. Positions 1573-1584 (LRTPILNSLLSP) are enriched in polar residues.

It belongs to the G-protein coupled receptor 3 family. GABA-B receptor subfamily.

It localises to the membrane. The chain is Metabotropic glutamate receptor-like protein R (grlR) from Dictyostelium discoideum (Social amoeba).